We begin with the raw amino-acid sequence, 185 residues long: Ribosome-recycling factor (185 aa).

Belongs to the RRF family.

The protein localises to the cytoplasm. In terms of biological role, responsible for the release of ribosomes from messenger RNA at the termination of protein biosynthesis. May increase the efficiency of translation by recycling ribosomes from one round of translation to another. This is Ribosome-recycling factor from Streptococcus thermophilus (strain CNRZ 1066).